The chain runs to 125 residues: Glycine cleavage system H protein (125 aa).

The Lipoyl-binding domain maps to 22–104 (SYIIGITDFA…YDTGWILKLT (83 aa)). An N6-lipoyllysine modification is found at lysine 63.

Belongs to the GcvH family. In terms of assembly, the glycine cleavage system is composed of four proteins: P, T, L and H. Requires (R)-lipoate as cofactor.

Functionally, the glycine cleavage system catalyzes the degradation of glycine. The H protein shuttles the methylamine group of glycine from the P protein to the T protein. Is also involved in protein lipoylation via its role as an octanoyl/lipoyl carrier protein intermediate. The sequence is that of Glycine cleavage system H protein from Listeria welshimeri serovar 6b (strain ATCC 35897 / DSM 20650 / CCUG 15529 / CIP 8149 / NCTC 11857 / SLCC 5334 / V8).